The sequence spans 1420 residues: DNA-directed RNA polymerase subunit beta' (1420 aa).

Residues cysteine 72, cysteine 74, cysteine 87, and cysteine 90 each coordinate Zn(2+). Mg(2+) contacts are provided by aspartate 462, aspartate 464, and aspartate 466. Positions 816, 896, 903, and 906 each coordinate Zn(2+).

This sequence belongs to the RNA polymerase beta' chain family. The RNAP catalytic core consists of 2 alpha, 1 beta, 1 beta' and 1 omega subunit. When a sigma factor is associated with the core the holoenzyme is formed, which can initiate transcription. It depends on Mg(2+) as a cofactor. The cofactor is Zn(2+).

The enzyme catalyses RNA(n) + a ribonucleoside 5'-triphosphate = RNA(n+1) + diphosphate. DNA-dependent RNA polymerase catalyzes the transcription of DNA into RNA using the four ribonucleoside triphosphates as substrates. This chain is DNA-directed RNA polymerase subunit beta', found in Blochmanniella floridana.